Consider the following 210-residue polypeptide: Thioredoxin-like 3-1, chloroplastic (210 aa).

The Thioredoxin domain occupies 81-210 (WRLKAFWSNI…EVRELINKFV (130 aa)). Residues C130 and C133 each act as nucleophile in the active site. Residues C130 and C133 are joined by a disulfide bond.

This sequence belongs to the thioredoxin family.

The protein localises to the plastid. It is found in the chloroplast stroma. Probable thiol-disulfide oxidoreductase that may participate in various redox reactions. This chain is Thioredoxin-like 3-1, chloroplastic (WCRKC1), found in Arabidopsis thaliana (Mouse-ear cress).